The chain runs to 464 residues: ESX-1 secretion system protein EccE1 (464 aa).

Helical transmembrane passes span 11–31 (FTTG…AICM) and 34–54 (DLLW…VLTI).

This sequence belongs to the EccE family. In terms of assembly, part of the ESX-1 / type VII secretion system (T7SS), which is composed of cytosolic and membrane components. The ESX-1 membrane complex is composed of EccB1, EccCa1, EccCb1, EccD1 and EccE1.

The protein resides in the cell inner membrane. Functionally, part of the ESX-1 / type VII specialized secretion system (T7SS), which exports several proteins including EsxA and EsxB. Plays a role in DNA conjugation, in at least a donor strain. This is ESX-1 secretion system protein EccE1 from Mycolicibacterium smegmatis (strain ATCC 700084 / mc(2)155) (Mycobacterium smegmatis).